Consider the following 642-residue polypeptide: Probable Xaa-Pro aminopeptidase P (642 aa).

The Mn(2+) site is built by aspartate 439, aspartate 450, glutamate 548, and glutamate 562.

Belongs to the peptidase M24B family. Mn(2+) is required as a cofactor.

The enzyme catalyses Release of any N-terminal amino acid, including proline, that is linked to proline, even from a dipeptide or tripeptide.. Its function is as follows. Catalyzes the removal of a penultimate prolyl residue from the N-termini of peptides. In Laccaria bicolor (strain S238N-H82 / ATCC MYA-4686) (Bicoloured deceiver), this protein is Probable Xaa-Pro aminopeptidase P (AMPP).